A 116-amino-acid chain; its full sequence is ATP-dependent Clp protease adapter protein ClpS (116 aa).

The segment covering Met1 to Lys11 has biased composition (polar residues). The segment at Met1 to Val23 is disordered.

Belongs to the ClpS family. Binds to the N-terminal domain of the chaperone ClpA.

Its function is as follows. Involved in the modulation of the specificity of the ClpAP-mediated ATP-dependent protein degradation. The protein is ATP-dependent Clp protease adapter protein ClpS of Brucella abortus (strain S19).